Reading from the N-terminus, the 207-residue chain is Transcription factor DYT1 (207 aa).

The interval 1–38 (MGGGSRFQEPVRMSRRKQVTKEKEEDENFKSPNLEAER) is disordered. In terms of domain architecture, bHLH spans 28-77 (NFKSPNLEAERRRREKLHCRLMALRSHVPIVTNMTKASIVEDAITYIGEL).

In terms of assembly, homodimer. In terms of tissue distribution, mostly expressed in anthers, and, to a lower extent, in young inflorescences undergoing meiosis and siliques.

The protein resides in the nucleus. Its function is as follows. Transcription factor. Involved in the control of tapetum development. Required for male fertility and pollen differentiation, especially during callose deposition. This chain is Transcription factor DYT1, found in Arabidopsis thaliana (Mouse-ear cress).